A 336-amino-acid polypeptide reads, in one-letter code: N-acetyl-gamma-glutamyl-phosphate reductase (336 aa).

Residue Cys148 is part of the active site.

Belongs to the NAGSA dehydrogenase family. Type 1 subfamily.

Its subcellular location is the cytoplasm. The catalysed reaction is N-acetyl-L-glutamate 5-semialdehyde + phosphate + NADP(+) = N-acetyl-L-glutamyl 5-phosphate + NADPH + H(+). It participates in amino-acid biosynthesis; L-arginine biosynthesis; N(2)-acetyl-L-ornithine from L-glutamate: step 3/4. Functionally, catalyzes the NADPH-dependent reduction of N-acetyl-5-glutamyl phosphate to yield N-acetyl-L-glutamate 5-semialdehyde. The protein is N-acetyl-gamma-glutamyl-phosphate reductase of Campylobacter curvus (strain 525.92).